A 71-amino-acid chain; its full sequence is Small ribosomal subunit protein bS21 (71 aa).

Belongs to the bacterial ribosomal protein bS21 family.

The polypeptide is Small ribosomal subunit protein bS21 (Shewanella sp. (strain MR-4)).